The primary structure comprises 441 residues: N-acetylmuramyl-L-alanine amidase (441 aa).

An N-terminal signal peptide occupies residues 1-25 (MKTKTLFIFSAILTLSIFAPNETFA).

The protein belongs to the peptidase S12 family.

It catalyses the reaction Hydrolyzes the link between N-acetylmuramoyl residues and L-amino acid residues in certain cell-wall glycopeptides.. It participates in cell wall biogenesis; peptidoglycan recycling. Its function is as follows. Involved in muropeptide recycling. Hydrolyzes the amide bond between N-acetylmuramic acid (MurNAc) and the L-alanine residue of the stem peptide. Cannot hydrolyze muropeptides containing N-acetylglucosamine (GlcNAc) at the non-reducing end. The chain is N-acetylmuramyl-L-alanine amidase from Bacillus subtilis (strain 168).